Here is a 580-residue protein sequence, read N- to C-terminus: Frizzled (580 aa).

An N-terminal signal peptide occupies residues 1 to 17 (MLLQPLLLLLLPALLQS). Residues 18-248 (AQRYDQTPLD…ERERTVLRYW (231 aa)) lie on the Extracellular side of the membrane. Residues 48-166 (PHHNRCEPIT…HGGEDLCVAE (119 aa)) enclose the FZ domain. Cystine bridges form between Cys-53-Cys-114, Cys-61-Cys-107, Cys-98-Cys-134, Cys-124-Cys-163, and Cys-128-Cys-151. N-linked (GlcNAc...) asparagine glycosylation is present at Asn-67. Asn-167 is a glycosylation site (N-linked (GlcNAc...) asparagine). A helical membrane pass occupies residues 249 to 269 (VGSWAAICVASCLFTVLTFLI). The Cytoplasmic segment spans residues 270-279 (DSSRFRYPER). The chain crosses the membrane as a helical span at residues 280–300 (AIVFLAVCYLVVGCAYVAGLG). Over 301-342 (AGDSVSCREPFPPPVKLGRLQMMSTITQGHRQTTACTVLFMA) the chain is Extracellular. Residues 343–363 (LYFCCMAAFAWWSCLAFAWFL) form a helical membrane-spanning segment. The Cytoplasmic portion of the chain corresponds to 364 to 379 (AAGLKWGHEAIENKSH). A helical transmembrane segment spans residues 380–400 (LFHLVAWAVPALQTISVLALA). Residues 401-424 (KVEGDILSGVCFVGQLDTHSLGGF) are Extracellular-facing. The helical transmembrane segment at 425 to 445 (LILPLCIYLSIGALFLLAGFI) threads the bilayer. Residues 446–470 (SLFRIRTVMKTDGKRTDKLERLMLR) lie on the Cytoplasmic side of the membrane. The helical transmembrane segment at 471 to 491 (IGFFSGLFILPALGLLGCLFY) threads the bilayer. Residues 492-531 (EYYNFDEWMIQWHRDICKPFSIPCPAARPPGTPEARPIFQ) lie on the Extracellular side of the membrane. A helical membrane pass occupies residues 532 to 552 (IYMVKYLCSMLVGVTSSVWLY). Residues 553 to 580 (SSKTMVSWRNFVERLQGKEPRTRAQAYV) are Cytoplasmic-facing. The Lys-Thr-X-X-X-Trp motif, mediates interaction with the PDZ domain of Dvl family members signature appears at 555–560 (KTMVSW). The PDZ-binding signature appears at 578–580 (AYV).

Belongs to the G-protein coupled receptor Fz/Smo family.

Its subcellular location is the cell membrane. Functionally, receptor for Wnt proteins. Most of frizzled receptors are coupled to the beta-catenin canonical signaling pathway, which leads to the activation of disheveled proteins, inhibition of GSK-3 kinase, nuclear accumulation of beta-catenin and activation of Wnt target genes. A second signaling pathway involving PKC and calcium fluxes has been seen for some family members, but it is not yet clear if it represents a distinct pathway or if it can be integrated in the canonical pathway, as PKC seems to be required for Wnt-mediated inactivation of GSK-3 kinase. Both pathways seem to involve interactions with G-proteins. Required to coordinate the cytoskeletons of epidermal cells to produce a parallel array of cuticular hairs and bristles. This is Frizzled (fz) from Drosophila virilis (Fruit fly).